A 316-amino-acid chain; its full sequence is Apolipoprotein E (316 aa).

The signal sequence occupies residues 1-18 (MKVLWVALVITLLAGCQA). 8 consecutive repeat copies span residues 79-100 (VLMD…GQLG), 101-122 (PIAQ…ARLA), 123-144 (SDME…ALMG), 145-166 (QTTD…KRLL), 167-188 (RDAE…EGSE), 189-210 (RSVS…VRAA), 211-232 (TVGT…QKLR), and 233-254 (GRME…EQLE). Residues 79–254 (VLMDETMKEV…HLEEMREQLE (176 aa)) form an 8 X 22 AA approximate tandem repeats region. An LDL and other lipoprotein receptors binding region spans residues 157–167 (HLRKLRKRLLR). 161–164 (LRKR) provides a ligand contact to heparin. The lipid-binding and lipoprotein association stretch occupies residues 209–289 (AATVGTLASQ…SWFEPLVEDM (81 aa)). A heparin-binding site is contributed by 228 to 235 (HQKLRGRM). Residues 265 to 316 (SQMRLQAEAFQARLKSWFEPLVEDMQRQWAGLVEKVQLAMATGPTSAPIENN) form a homooligomerization region. A specificity for association with VLDL region spans residues 277-289 (RLKSWFEPLVEDM).

It belongs to the apolipoprotein A1/A4/E family. As to quaternary structure, homotetramer. May interact with ABCA1; functionally associated with ABCA1 in the biogenesis of HDLs. May interact with APP/A4 amyloid-beta peptide; the interaction is extremely stable in vitro but its physiological significance is unclear. May interact with MAPT. May interact with MAP2. In the cerebrospinal fluid, interacts with secreted SORL1. Interacts with PMEL; this allows the loading of PMEL luminal fragment on ILVs to induce fibril nucleation. APOE exists as multiple glycosylated and sialylated glycoforms within cells and in plasma. The extent of glycosylation and sialylation are tissue and context specific. In terms of processing, glycated in plasma VLDL. Post-translationally, phosphorylated by FAM20C in the extracellular medium.

The protein localises to the secreted. It localises to the extracellular space. The protein resides in the extracellular matrix. Its subcellular location is the extracellular vesicle. It is found in the endosome. The protein localises to the multivesicular body. APOE is an apolipoprotein, a protein associating with lipid particles, that mainly functions in lipoprotein-mediated lipid transport between organs via the plasma and interstitial fluids. APOE is a core component of plasma lipoproteins and is involved in their production, conversion and clearance. Apolipoproteins are amphipathic molecules that interact both with lipids of the lipoprotein particle core and the aqueous environment of the plasma. As such, APOE associates with chylomicrons, chylomicron remnants, very low density lipoproteins (VLDL) and intermediate density lipoproteins (IDL) but shows a preferential binding to high-density lipoproteins (HDL). It also binds a wide range of cellular receptors including the LDL receptor/LDLR and the very low-density lipoprotein receptor/VLDLR that mediate the cellular uptake of the APOE-containing lipoprotein particles. Finally, APOE also has a heparin-binding activity and binds heparan-sulfate proteoglycans on the surface of cells, a property that supports the capture and the receptor-mediated uptake of APOE-containing lipoproteins by cells. This chain is Apolipoprotein E (APOE), found in Tursiops truncatus (Atlantic bottle-nosed dolphin).